We begin with the raw amino-acid sequence, 448 residues long: Trigger factor (448 aa).

Residues 172-257 (GDRVTVDFVG…MKKVEWPHLP (86 aa)) form the PPIase FKBP-type domain.

It belongs to the FKBP-type PPIase family. Tig subfamily.

Its subcellular location is the cytoplasm. It catalyses the reaction [protein]-peptidylproline (omega=180) = [protein]-peptidylproline (omega=0). Functionally, involved in protein export. Acts as a chaperone by maintaining the newly synthesized protein in an open conformation. Functions as a peptidyl-prolyl cis-trans isomerase. The sequence is that of Trigger factor from Burkholderia multivorans (strain ATCC 17616 / 249).